The following is a 179-amino-acid chain: MSLKDRFDRFIDYFTEDEDSSLPYEKRDEPVFTSVNSSQEPALPMNQPSQSAGTKENNITRLHARQQELANQSQRATDKVIIDVRYPRKYEDATEIVDLLAGNESILIDFQYMTEVQARRCLDYLDGACHVLAGNLKKVASTMYLLTPVNVIVNVEDIRLPDEDQQGEFGFDMKRNRVR.

The segment at 22–55 (LPYEKRDEPVFTSVNSSQEPALPMNQPSQSAGTK) is disordered. Residues 33 to 55 (TSVNSSQEPALPMNQPSQSAGTK) are compositionally biased toward polar residues.

It belongs to the SepF family. Homodimer. Interacts with FtsZ.

It is found in the cytoplasm. Functionally, cell division protein that is part of the divisome complex and is recruited early to the Z-ring. Probably stimulates Z-ring formation, perhaps through the cross-linking of FtsZ protofilaments. Its function overlaps with FtsA. The protein is Cell division protein SepF of Streptococcus pneumoniae (strain Taiwan19F-14).